The sequence spans 319 residues: Acetyl-coenzyme A carboxylase carboxyl transferase subunit alpha (319 aa).

The CoA carboxyltransferase C-terminal domain occupies 35–296; that stretch reads DLDKEIEQLE…KATLVANLAE (262 aa).

The protein belongs to the AccA family. As to quaternary structure, acetyl-CoA carboxylase is a heterohexamer composed of biotin carboxyl carrier protein (AccB), biotin carboxylase (AccC) and two subunits each of ACCase subunit alpha (AccA) and ACCase subunit beta (AccD).

It is found in the cytoplasm. It catalyses the reaction N(6)-carboxybiotinyl-L-lysyl-[protein] + acetyl-CoA = N(6)-biotinyl-L-lysyl-[protein] + malonyl-CoA. It functions in the pathway lipid metabolism; malonyl-CoA biosynthesis; malonyl-CoA from acetyl-CoA: step 1/1. Its function is as follows. Component of the acetyl coenzyme A carboxylase (ACC) complex. First, biotin carboxylase catalyzes the carboxylation of biotin on its carrier protein (BCCP) and then the CO(2) group is transferred by the carboxyltransferase to acetyl-CoA to form malonyl-CoA. The chain is Acetyl-coenzyme A carboxylase carboxyl transferase subunit alpha from Photobacterium profundum (strain SS9).